The primary structure comprises 256 residues: NifU-like protein, mitochondrial (256 aa).

Positions 196 to 199 match the CxxC motif motif; that stretch reads CTSC.

The protein belongs to the NifU family. As to quaternary structure, homodimer; in absence of BOL3, probably bridged by an iron-sulfure cluster. Interacts with BOL3. Interacts with apo-target proteins, such as ACO1, LYS4, ACO2 and SDH2.

The protein localises to the mitochondrion matrix. Involved in iron homeostasis within the mitochondrion where it is involved in the assembly of iron-sulfur proteins. Together with BOL3, required during the last step of iron-sulfur protein assembly when the iron-sulfur cluster is inserted into the target protein. Required for protecting iron sulfur clusters from oxidative damage. This is NifU-like protein, mitochondrial (NFU1) from Saccharomyces cerevisiae (strain ATCC 204508 / S288c) (Baker's yeast).